Here is a 178-residue protein sequence, read N- to C-terminus: ATP synthase subunit delta (178 aa).

Belongs to the ATPase delta chain family. In terms of assembly, F-type ATPases have 2 components, F(1) - the catalytic core - and F(0) - the membrane proton channel. F(1) has five subunits: alpha(3), beta(3), gamma(1), delta(1), epsilon(1). F(0) has three main subunits: a(1), b(2) and c(10-14). The alpha and beta chains form an alternating ring which encloses part of the gamma chain. F(1) is attached to F(0) by a central stalk formed by the gamma and epsilon chains, while a peripheral stalk is formed by the delta and b chains.

It is found in the cell membrane. In terms of biological role, f(1)F(0) ATP synthase produces ATP from ADP in the presence of a proton or sodium gradient. F-type ATPases consist of two structural domains, F(1) containing the extramembraneous catalytic core and F(0) containing the membrane proton channel, linked together by a central stalk and a peripheral stalk. During catalysis, ATP synthesis in the catalytic domain of F(1) is coupled via a rotary mechanism of the central stalk subunits to proton translocation. This protein is part of the stalk that links CF(0) to CF(1). It either transmits conformational changes from CF(0) to CF(1) or is implicated in proton conduction. This Streptococcus pyogenes serotype M49 (strain NZ131) protein is ATP synthase subunit delta.